A 498-amino-acid polypeptide reads, in one-letter code: Glycerol kinase (498 aa).

T12 contributes to the ADP binding site. 3 residues coordinate ATP: T12, T13, and S14. T12 contributes to the sn-glycerol 3-phosphate binding site. R16 is a binding site for ADP. Residues R82, E83, Y134, and D243 each contribute to the sn-glycerol 3-phosphate site. Glycerol-binding residues include R82, E83, Y134, D243, and Q244. ADP is bound by residues T265 and G308. Residues T265, G308, Q312, and G409 each coordinate ATP. The ADP site is built by G409 and N413.

Belongs to the FGGY kinase family. As to quaternary structure, homotetramer and homodimer (in equilibrium).

It carries out the reaction glycerol + ATP = sn-glycerol 3-phosphate + ADP + H(+). It functions in the pathway polyol metabolism; glycerol degradation via glycerol kinase pathway; sn-glycerol 3-phosphate from glycerol: step 1/1. Its activity is regulated as follows. Activated by phosphorylation and inhibited by fructose 1,6-bisphosphate (FBP). In terms of biological role, key enzyme in the regulation of glycerol uptake and metabolism. Catalyzes the phosphorylation of glycerol to yield sn-glycerol 3-phosphate. This chain is Glycerol kinase, found in Clostridium botulinum (strain ATCC 19397 / Type A).